Here is a 326-residue protein sequence, read N- to C-terminus: Phosphate acyltransferase (326 aa).

The protein belongs to the PlsX family. In terms of assembly, homodimer. Probably interacts with PlsY.

It localises to the cytoplasm. The enzyme catalyses a fatty acyl-[ACP] + phosphate = an acyl phosphate + holo-[ACP]. It participates in lipid metabolism; phospholipid metabolism. In terms of biological role, catalyzes the reversible formation of acyl-phosphate (acyl-PO(4)) from acyl-[acyl-carrier-protein] (acyl-ACP). This enzyme utilizes acyl-ACP as fatty acyl donor, but not acyl-CoA. The sequence is that of Phosphate acyltransferase from Petrotoga mobilis (strain DSM 10674 / SJ95).